The chain runs to 204 residues: Holliday junction branch migration complex subunit RuvA (204 aa).

Positions 1-63 (MIGKLSGKAD…EEHIHLYGFL (63 aa)) are domain I. Residues 64–142 (TLEEKNFFNL…KISSSSAIKD (79 aa)) are domain II. Residues 143–153 (SLNIKNITPVT) are flexible linker. A domain III region spans residues 153–204 (TSNEVMKALINLGFSRFEAQNVVQGIITQNPKISIDELIKTALKNRNSKFFS).

It belongs to the RuvA family. As to quaternary structure, homotetramer. Forms an RuvA(8)-RuvB(12)-Holliday junction (HJ) complex. HJ DNA is sandwiched between 2 RuvA tetramers; dsDNA enters through RuvA and exits via RuvB. An RuvB hexamer assembles on each DNA strand where it exits the tetramer. Each RuvB hexamer is contacted by two RuvA subunits (via domain III) on 2 adjacent RuvB subunits; this complex drives branch migration. In the full resolvosome a probable DNA-RuvA(4)-RuvB(12)-RuvC(2) complex forms which resolves the HJ.

Its subcellular location is the cytoplasm. Functionally, the RuvA-RuvB-RuvC complex processes Holliday junction (HJ) DNA during genetic recombination and DNA repair, while the RuvA-RuvB complex plays an important role in the rescue of blocked DNA replication forks via replication fork reversal (RFR). RuvA specifically binds to HJ cruciform DNA, conferring on it an open structure. The RuvB hexamer acts as an ATP-dependent pump, pulling dsDNA into and through the RuvAB complex. HJ branch migration allows RuvC to scan DNA until it finds its consensus sequence, where it cleaves and resolves the cruciform DNA. The polypeptide is Holliday junction branch migration complex subunit RuvA (Rickettsia canadensis (strain McKiel)).